The chain runs to 1059 residues: MPKRTDIKKIMVIGSGPIIIGQAAEFDYAGTQACLALKEEGYSVVLVNSNPATIMTDKEIADKVYIEPITIEFVTRILRKERPDAILPTLGGQTGLNMAMELSRAGILDELGVELLGTKLSAIDQAEDRDLFKQLMEDLEQPIPESDIVNSVDEAVAFAAKIGYPVIVRPAFTLGGTGGGMCADEKELREIAENGLKLSPVTQCLIERSIAGFKEIEYEVMRDSADNALVVCNMENFDPVGIHTGDSIVFAPTQTLSDIENQMLRDASLKIIRALKIEGGCNVQLALDPHSFKYYVIEVNPRVSRSSALASKATGYPIAKLAAKIAVGLTLDEMINPVTGTTYAMFEPALDYVVAKIPRFPFDKFEHGERRLGTQMKATGEVMAIGRNIEESLLKACRSLEIGVYHNEMPELTNVSDDALVAKIVKAQDDRLFYLSEAIRRGYSIEELSDLTKIDLFFLDKLLHIFEIETELAAKVGDIAILKEAKHNGFADRKIADIWQMTADAVRKLRLDNKIIPVYKMVDTCAAEFESATPYFYSTYEWENESIKSEKESVIVLGSGPIRIGQGVEFDYATVHSVKAIQNAGYEAIIMNSNPETVSTDFSVSDKLYFEPLTFEDVMNVIELEQPKGVIVQFGGQTAINLAEPLSHAGVTILGTQVADLDRAEDRDLFEQALKDLNIPQPPGQTATNEEEAVASARKIGFPVLVRPSYVLGGRAMEIVESENDLRSYMRTAVKASPDHPVLVDSYLVGSECEVDAISDGKDVLIPGIMEHIERAGVHSGDSMAVYPPQTLSKEVQATIADYTKRLAIGLNCIGMMNIQFVIKDETVYVIEVNPRASRTVPFLSKVTDIPMAQIATKLILGSSLTELGYKDGLYPESQNVHVKAPVFSFTKLAKVDSLLGPEMKSTGEVMGTDSTLEKALYKAFEASYFHLPAFGNVIFTIADDTKEEALALARRFSNIGYSILATEGTAKFFAENNLEAVLVNKLGEDDDNDIPAYVRSGKVQAIINTVGNKRTFDEDGAAIRSSAIEHGVPLFTALDTADAMVRVLESRGFITQAI.

The interval 1 to 401 (MPKRTDIKKI…SLLKACRSLE (401 aa)) is carboxyphosphate synthetic domain. Residues Arg129, Arg169, Gly175, Gly176, Arg208, Ile210, Glu215, Gly241, Ile242, His243, Gln284, and Glu298 each coordinate ATP. The region spanning 133 to 327 (KQLMEDLEQP…IAKLAAKIAV (195 aa)) is the ATP-grasp 1 domain. The Mg(2+) site is built by Gln284, Glu298, and Asn300. Mn(2+) is bound by residues Gln284, Glu298, and Asn300. The oligomerization domain stretch occupies residues 402–546 (IGVYHNEMPE…YSTYEWENES (145 aa)). The interval 547–929 (IKSEKESVIV…ALYKAFEASY (383 aa)) is carbamoyl phosphate synthetic domain. Residues 671-861 (EQALKDLNIP…MAQIATKLIL (191 aa)) form the ATP-grasp 2 domain. Residues Arg707, Ser746, Leu748, Glu752, Gly777, Val778, His779, Ser780, Gln820, and Glu832 each contribute to the ATP site. Residues Gln820, Glu832, and Asn834 each contribute to the Mg(2+) site. The Mn(2+) site is built by Gln820, Glu832, and Asn834. Positions 930-1059 (FHLPAFGNVI…ESRGFITQAI (130 aa)) constitute an MGS-like domain. The tract at residues 930–1059 (FHLPAFGNVI…ESRGFITQAI (130 aa)) is allosteric domain.

The protein belongs to the CarB family. As to quaternary structure, composed of two chains; the small (or glutamine) chain promotes the hydrolysis of glutamine to ammonia, which is used by the large (or ammonia) chain to synthesize carbamoyl phosphate. Tetramer of heterodimers (alpha,beta)4. Requires Mg(2+) as cofactor. Mn(2+) serves as cofactor.

It carries out the reaction hydrogencarbonate + L-glutamine + 2 ATP + H2O = carbamoyl phosphate + L-glutamate + 2 ADP + phosphate + 2 H(+). The enzyme catalyses hydrogencarbonate + NH4(+) + 2 ATP = carbamoyl phosphate + 2 ADP + phosphate + 2 H(+). It functions in the pathway amino-acid biosynthesis; L-arginine biosynthesis; carbamoyl phosphate from bicarbonate: step 1/1. The protein operates within pyrimidine metabolism; UMP biosynthesis via de novo pathway; (S)-dihydroorotate from bicarbonate: step 1/3. Large subunit of the glutamine-dependent carbamoyl phosphate synthetase (CPSase). CPSase catalyzes the formation of carbamoyl phosphate from the ammonia moiety of glutamine, carbonate, and phosphate donated by ATP, constituting the first step of 2 biosynthetic pathways, one leading to arginine and/or urea and the other to pyrimidine nucleotides. The large subunit (synthetase) binds the substrates ammonia (free or transferred from glutamine from the small subunit), hydrogencarbonate and ATP and carries out an ATP-coupled ligase reaction, activating hydrogencarbonate by forming carboxy phosphate which reacts with ammonia to form carbamoyl phosphate. This chain is Carbamoyl phosphate synthase large chain, found in Streptococcus mutans serotype c (strain ATCC 700610 / UA159).